The chain runs to 287 residues: Cbb3-type cytochrome c oxidase subunit FixPc (287 aa).

The Cytoplasmic segment spans residues 1 to 36 (MSEKHIDEFSGVETTGHEWDGIRELNNPMPRWWVWT). A helical membrane pass occupies residues 37–57 (FYATIVWALGYAIAYPAIPMI). Over 58-287 (TDATKGMLGF…IFVHSLGGGT (230 aa)) the chain is Periplasmic. Cytochrome c domains lie at 108–196 (FAIA…WGLT) and 203–284 (GLAE…HSLG). Positions 121, 124, 125, 173, 216, 219, 220, and 261 each coordinate heme c.

Belongs to the CcoP / FixP family. As to quaternary structure, component of the cbb3-type cytochrome c oxidase at least composed of FixN, FixO, FixQ and FixP. Requires heme c as cofactor.

The protein resides in the cell inner membrane. It functions in the pathway energy metabolism; oxidative phosphorylation. Functionally, C-type cytochrome. Part of the cbb3-type cytochrome c oxidase complex. FixP subunit is required for transferring electrons from donor cytochrome c via its heme groups to FixO subunit. From there, electrons are shuttled to the catalytic binuclear center of FixN subunit where oxygen reduction takes place. The complex also functions as a proton pump. The protein is Cbb3-type cytochrome c oxidase subunit FixPc of Rhizobium leguminosarum bv. viciae.